Reading from the N-terminus, the 637-residue chain is Chaperone protein HtpG (637 aa).

The interval 1–345 is a; substrate-binding; the sequence is MTAAQKETLG…SNDLPLNVSR (345 aa). The b stretch occupies residues 346 to 562; the sequence is EILQDNKVTQ…DNDMSSQMQK (217 aa). The segment at 563-637 is c; sequence LMESVGQAAP…LNKLMLELSK (75 aa).

This sequence belongs to the heat shock protein 90 family. In terms of assembly, homodimer.

It is found in the cytoplasm. Functionally, molecular chaperone. Has ATPase activity. This is Chaperone protein HtpG from Pseudoalteromonas translucida (strain TAC 125).